Here is a 106-residue protein sequence, read N- to C-terminus: Large ribosomal subunit protein bL21 (106 aa).

This sequence belongs to the bacterial ribosomal protein bL21 family. In terms of assembly, part of the 50S ribosomal subunit. Contacts protein L20.

This protein binds to 23S rRNA in the presence of protein L20. The chain is Large ribosomal subunit protein bL21 from Fervidobacterium nodosum (strain ATCC 35602 / DSM 5306 / Rt17-B1).